Reading from the N-terminus, the 346-residue chain is Peripherin-2 (346 aa).

Residues 1–24 (MALLKVKFDQKKRVKLAQGLWLMN) are Cytoplasmic-facing. A helical membrane pass occupies residues 25-43 (WLSVLAGIVLFSLGLFLKI). Residues 44-61 (ELRKRSDVMDNSESHFVP) lie on the Lumenal side of the membrane. Residues 62–80 (NSLIGVGVLSCVFNSLAGK) form a helical membrane-spanning segment. Over 81 to 99 (ICYDALDPAKYAKWKPWLK) the chain is Cytoplasmic. The chain crosses the membrane as a helical span at residues 100 to 123 (LYLAVCVFFNVILFLVALCCFLLR). At 124–264 (GSLESTLAYG…LNYYSSLMNS (141 aa)) the chain is on the lumenal side. Asn229 carries an N-linked (GlcNAc...) asparagine glycan. A helical transmembrane segment spans residues 265–290 (MGVVTLLIWLFEVSITAGLRFLHTAL). At 291–346 (ESVSNPEDPECESEGWLLENSVSETWKAFLESFKKLGKSNQVEAEAADAGQAPEAG) the chain is on the cytoplasmic side. An interaction with MREG region spans residues 341 to 346 (QAPEAG).

Belongs to the PRPH2/ROM1 family. Homodimer; disulfide-linked. Forms a homotetramer. Forms a heterotetramer with ROM1. Homotetramer and heterotetramer core complexes go on to form higher order complexes by formation of intermolecular disulfide bonds. Interacts with MREG. Interacts with STX3. Interacts with SNAP25. Retina (photoreceptor). In rim region of ROS (rod outer segment) disks.

The protein resides in the membrane. It is found in the cell projection. Its subcellular location is the cilium. The protein localises to the photoreceptor outer segment. It localises to the photoreceptor inner segment. Essential for retina photoreceptor outer segment disk morphogenesis, may also play a role with ROM1 in the maintenance of outer segment disk structure. Required for the maintenance of retinal outer nuclear layer thickness. Required for the correct development and organization of the photoreceptor inner segment. The chain is Peripherin-2 (Prph2) from Rattus norvegicus (Rat).